Consider the following 424-residue polypeptide: Elongation factor 1-alpha (424 aa).

The tr-type G domain occupies 5 to 223 (KPHLNLITIG…DAFKVPEKPI (219 aa)). The interval 14 to 21 (GHVDHGKS) is G1. 14–21 (GHVDHGKS) is a GTP binding site. A Mg(2+)-binding site is contributed by Ser-21. The segment at 70 to 74 (GVTID) is G2. Positions 91–94 (DAPG) are G3. GTP-binding positions include 91 to 95 (DAPGH) and 148 to 151 (NKMD). The tract at residues 148–151 (NKMD) is G4. The segment at 187–189 (SGY) is G5.

It belongs to the TRAFAC class translation factor GTPase superfamily. Classic translation factor GTPase family. EF-Tu/EF-1A subfamily.

It localises to the cytoplasm. It carries out the reaction GTP + H2O = GDP + phosphate + H(+). GTP hydrolase that promotes the GTP-dependent binding of aminoacyl-tRNA to the A-site of ribosomes during protein biosynthesis. The protein is Elongation factor 1-alpha of Thermoplasma volcanium (strain ATCC 51530 / DSM 4299 / JCM 9571 / NBRC 15438 / GSS1).